The primary structure comprises 115 residues: Fluoride-specific ion channel FluC 4 (115 aa).

2 consecutive transmembrane segments (helical) span residues W19–G39 and L42–G62. The Na(+) site is built by G61 and T64. The helical transmembrane segment at I89 to W109 threads the bilayer.

The protein belongs to the fluoride channel Fluc/FEX (TC 1.A.43) family.

The protein localises to the cell inner membrane. It catalyses the reaction fluoride(in) = fluoride(out). Na(+) is not transported, but it plays an essential structural role and its presence is essential for fluoride channel function. In terms of biological role, fluoride-specific ion channel. Important for reducing fluoride concentration in the cell, thus reducing its toxicity. This chain is Fluoride-specific ion channel FluC 4, found in Brucella melitensis biotype 1 (strain ATCC 23456 / CCUG 17765 / NCTC 10094 / 16M).